Here is a 206-residue protein sequence, read N- to C-terminus: dITP/XTP pyrophosphatase (206 aa).

Residue 7–12 (SSHGYK) participates in substrate binding. Catalysis depends on aspartate 70, which acts as the Proton acceptor. Aspartate 70 provides a ligand contact to Mg(2+). Residues threonine 71, 154 to 157 (FGYD), lysine 177, and 182 to 183 (HR) each bind substrate.

It belongs to the HAM1 NTPase family. Homodimer. Mg(2+) serves as cofactor.

It carries out the reaction XTP + H2O = XMP + diphosphate + H(+). The catalysed reaction is dITP + H2O = dIMP + diphosphate + H(+). It catalyses the reaction ITP + H2O = IMP + diphosphate + H(+). In terms of biological role, pyrophosphatase that catalyzes the hydrolysis of nucleoside triphosphates to their monophosphate derivatives, with a high preference for the non-canonical purine nucleotides XTP (xanthosine triphosphate), dITP (deoxyinosine triphosphate) and ITP. Seems to function as a house-cleaning enzyme that removes non-canonical purine nucleotides from the nucleotide pool, thus preventing their incorporation into DNA/RNA and avoiding chromosomal lesions. This is dITP/XTP pyrophosphatase from Chlamydia pneumoniae (Chlamydophila pneumoniae).